Reading from the N-terminus, the 503-residue chain is Aspartyl/glutamyl-tRNA(Asn/Gln) amidotransferase subunit B (503 aa).

The protein belongs to the GatB/GatE family. GatB subfamily. Heterotrimer of A, B and C subunits.

The catalysed reaction is L-glutamyl-tRNA(Gln) + L-glutamine + ATP + H2O = L-glutaminyl-tRNA(Gln) + L-glutamate + ADP + phosphate + H(+). It carries out the reaction L-aspartyl-tRNA(Asn) + L-glutamine + ATP + H2O = L-asparaginyl-tRNA(Asn) + L-glutamate + ADP + phosphate + 2 H(+). Its function is as follows. Allows the formation of correctly charged Asn-tRNA(Asn) or Gln-tRNA(Gln) through the transamidation of misacylated Asp-tRNA(Asn) or Glu-tRNA(Gln) in organisms which lack either or both of asparaginyl-tRNA or glutaminyl-tRNA synthetases. The reaction takes place in the presence of glutamine and ATP through an activated phospho-Asp-tRNA(Asn) or phospho-Glu-tRNA(Gln). This Cereibacter sphaeroides (strain ATCC 17023 / DSM 158 / JCM 6121 / CCUG 31486 / LMG 2827 / NBRC 12203 / NCIMB 8253 / ATH 2.4.1.) (Rhodobacter sphaeroides) protein is Aspartyl/glutamyl-tRNA(Asn/Gln) amidotransferase subunit B.